We begin with the raw amino-acid sequence, 353 residues long: UPF0283 membrane protein YcjF (353 aa).

The interval 16–35 is disordered; that stretch reads KEESTSAFKAQQTFSEAESR. A compositionally biased stretch (polar residues) spans 20-31; that stretch reads TSAFKAQQTFSE. Transmembrane regions (helical) follow at residues 70–90, 100–120, and 213–233; these read MVMG…VQWT, VALG…GSVV, and ESTL…FIAW.

This sequence belongs to the UPF0283 family.

The protein localises to the cell inner membrane. The polypeptide is UPF0283 membrane protein YcjF (Salmonella heidelberg (strain SL476)).